Consider the following 234-residue polypeptide: Sugar fermentation stimulation protein A (234 aa).

The H-T-H motif DNA-binding region spans 201–220 (LLSEAQQRGVEILAYKAELS).

The protein belongs to the SfsA family.

In terms of biological role, binds to DNA non-specifically. Could be a regulatory factor involved in maltose metabolism. The polypeptide is Sugar fermentation stimulation protein A (Escherichia coli O7:K1 (strain IAI39 / ExPEC)).